A 360-amino-acid chain; its full sequence is Cytokine receptor-like factor 2 (360 aa).

The signal sequence occupies residues 1 to 18 (MRAVTWAIVAMLLPRVLG). The Extracellular segment spans residues 27–238 (TGGVGDTLSV…PRTPGTPTPP (212 aa)). Asn-62 carries N-linked (GlcNAc...) asparagine glycosylation. Cys-77 and Cys-90 form a disulfide bridge. The Fibronectin type-III domain maps to 123-214 (RPRPPWNVTL…PSKWTGVASL (92 aa)). Residues Asn-129 and Asn-174 are each glycosylated (N-linked (GlcNAc...) asparagine). Cys-185 and Cys-223 form a disulfide bridge. The WSXWS motif motif lies at 205 to 209 (PSKWT). The helical transmembrane segment at 239–259 (LALACGLAVALLTLVLLLALL) threads the bilayer. Over 260-360 (RMRRVKEALL…LMGDSGYTTL (101 aa)) the chain is Cytoplasmic. Residues 268–276 (LLPGVPDPR) carry the Box 1 motif motif.

This sequence belongs to the type I cytokine receptor family. Type 5 subfamily. In terms of assembly, heterodimer of CRLF2 and IL7R. In terms of tissue distribution, expressed in all tissues examined including brain, thymus, lung, heart, muscle, stomach, small intestine, liver, kidney, spleen, testis and skin. Highest levels in thymus, liver and testis.

The protein resides in the membrane. Functionally, receptor for thymic stromal lymphopoietin (TSLP). Forms a functional complex with TSLP and IL7R which is capable of stimulating cell proliferation through activation of STAT3 and STAT5. Also activates JAK2. Implicated in the development of the hematopoietic system. In Rattus norvegicus (Rat), this protein is Cytokine receptor-like factor 2 (Crlf2).